Here is a 266-residue protein sequence, read N- to C-terminus: Undecaprenyl-diphosphatase (266 aa).

The next 8 membrane-spanning stretches (helical) occupy residues Met-1–Ile-21, Gln-39–Phe-59, Trp-87–Ile-107, Ala-115–Phe-135, Val-144–Thr-164, Ala-183–Val-203, Ala-218–Leu-238, and Met-246–Ala-266.

This sequence belongs to the UppP family.

It localises to the cell inner membrane. It catalyses the reaction di-trans,octa-cis-undecaprenyl diphosphate + H2O = di-trans,octa-cis-undecaprenyl phosphate + phosphate + H(+). Functionally, catalyzes the dephosphorylation of undecaprenyl diphosphate (UPP). Confers resistance to bacitracin. This chain is Undecaprenyl-diphosphatase, found in Shewanella sediminis (strain HAW-EB3).